The sequence spans 87 residues: Cell division topological specificity factor (87 aa).

It belongs to the MinE family.

In terms of biological role, prevents the cell division inhibition by proteins MinC and MinD at internal division sites while permitting inhibition at polar sites. This ensures cell division at the proper site by restricting the formation of a division septum at the midpoint of the long axis of the cell. This is Cell division topological specificity factor from Blochmanniella pennsylvanica (strain BPEN).